A 176-amino-acid chain; its full sequence is ATP-dependent protease subunit HslV (176 aa).

Thr-2 is an active-site residue. Gly-157, Cys-160, and Thr-163 together coordinate Na(+).

This sequence belongs to the peptidase T1B family. HslV subfamily. A double ring-shaped homohexamer of HslV is capped on each side by a ring-shaped HslU homohexamer. The assembly of the HslU/HslV complex is dependent on binding of ATP.

The protein localises to the cytoplasm. The enzyme catalyses ATP-dependent cleavage of peptide bonds with broad specificity.. Allosterically activated by HslU binding. Protease subunit of a proteasome-like degradation complex believed to be a general protein degrading machinery. The polypeptide is ATP-dependent protease subunit HslV (Pseudomonas putida (strain ATCC 47054 / DSM 6125 / CFBP 8728 / NCIMB 11950 / KT2440)).